A 235-amino-acid chain; its full sequence is Ribonuclease PH (235 aa).

Phosphate contacts are provided by residues arginine 86 and 124–126; that span reads GTR.

It belongs to the RNase PH family. As to quaternary structure, homohexameric ring arranged as a trimer of dimers.

The enzyme catalyses tRNA(n+1) + phosphate = tRNA(n) + a ribonucleoside 5'-diphosphate. In terms of biological role, phosphorolytic 3'-5' exoribonuclease that plays an important role in tRNA 3'-end maturation. Removes nucleotide residues following the 3'-CCA terminus of tRNAs; can also add nucleotides to the ends of RNA molecules by using nucleoside diphosphates as substrates, but this may not be physiologically important. Probably plays a role in initiation of 16S rRNA degradation (leading to ribosome degradation) during starvation. This chain is Ribonuclease PH, found in Francisella tularensis subsp. mediasiatica (strain FSC147).